Consider the following 882-residue polypeptide: Nitrogen regulatory protein areA (882 aa).

Residues 1–13 (MSGLTLGGGGSGG) show a composition bias toward gly residues. Disordered stretches follow at residues 1 to 75 (MSGL…PDSL), 139 to 191 (KRKE…LTSD), 228 to 257 (SRKDQVAESTPVPASFPHPPQDQRKNSEFG), 325 to 344 (NNHSSSHHNHTSPGMPFGLD), 394 to 422 (STDFFSPPQSGYQSTASTPQPAYDGEHSM), 461 to 545 (NQDQ…DMNG), and 579 to 675 (MDTP…GPTT). The span at 48–59 (SDFSQLSDDFSF) shows a compositional bias: low complexity. Polar residues-rich tracts occupy residues 156 to 169 (NSVSGPSGIAQLTS) and 177 to 191 (PTRQNPSLSTDLTSD). Over residues 325–334 (NNHSSSHHNH) the composition is skewed to basic residues. Polar residues-rich tracts occupy residues 394 to 413 (STDFFSPPQSGYQSTASTPQ) and 492 to 503 (QVLNPNDFSTGA). Positions 604-613 (VRNREQDPRR) are enriched in basic and acidic residues. Positions 617-642 (ARTTSTPNTAQLLRQSMNANTSHTSP) are enriched in polar residues. The GATA-type zinc-finger motif lies at 676–700 (CTNCFTQTTPLWRRNPEGQPLCNAC). The tract at residues 723-871 (RNRSSANSLA…NHSIAGGQGA (149 aa)) is disordered. The segment covering 745–759 (KNSVQQTTVTTPTSS) has biased composition (low complexity). Residues 795–811 (NPTTSSPGQSRGTSSVQ) show a composition bias toward polar residues. Low complexity predominate over residues 848 to 861 (ALAPAMPPAAANPA).

The protein resides in the nucleus. Major nitrogen regulatory protein. Positively acting regulatory gene of nitrogen metabolite repression. This Aspergillus niger protein is Nitrogen regulatory protein areA (areA).